The sequence spans 258 residues: uncharacterized protein (258 aa).

Positions 1–23 (MVWCHYILLVLTFFLFTTFFTAA) are cleaved as a signal peptide. Topologically, residues 24–64 (CPAIFTWLNSLFRLSNDSPHVVHTSIAEVGDIEDGRVDKDG) are cytoplasmic. A helical membrane pass occupies residues 65–85 (VLFVDLEFFLGCLPFFFFALV). The Extracellular portion of the chain corresponds to 86-123 (DQSSSSSVCKPLSPSDAKRSSNSLLRLSLVSSNDSDSS). An N-linked (GlcNAc...) asparagine glycan is attached at Asn-118. The helical transmembrane segment at 124–144 (VSVSTFAFFFFFLFFLFFVFT) threads the bilayer. Topologically, residues 145 to 230 (CTFSSELTSS…SSSISFRISS (86 aa)) are cytoplasmic. The chain crosses the membrane as a helical span at residues 231–251 (IFFLCSLVFMWFFNCFSDLNV). Residues 252 to 258 (LLQIKHS) are Extracellular-facing.

The protein localises to the membrane. This is an uncharacterized protein from Saccharomyces cerevisiae (strain ATCC 204508 / S288c) (Baker's yeast).